We begin with the raw amino-acid sequence, 860 residues long: Leucine--tRNA ligase (860 aa).

Positions 42–52 match the 'HIGH' region motif; sequence PYPSGRLHMGH. Positions 619-623 match the 'KMSKS' region motif; sequence KMSKS. Residue Lys-622 participates in ATP binding.

It belongs to the class-I aminoacyl-tRNA synthetase family.

It localises to the cytoplasm. The enzyme catalyses tRNA(Leu) + L-leucine + ATP = L-leucyl-tRNA(Leu) + AMP + diphosphate. The polypeptide is Leucine--tRNA ligase (Histophilus somni (strain 129Pt) (Haemophilus somnus)).